A 444-amino-acid polypeptide reads, in one-letter code: Methylenetetrahydrofolate--tRNA-(uracil-5-)-methyltransferase TrmFO (444 aa).

9–14 (GAGMAG) contributes to the FAD binding site.

It belongs to the MnmG family. TrmFO subfamily. FAD is required as a cofactor.

The protein resides in the cytoplasm. It catalyses the reaction uridine(54) in tRNA + (6R)-5,10-methylene-5,6,7,8-tetrahydrofolate + NADH + H(+) = 5-methyluridine(54) in tRNA + (6S)-5,6,7,8-tetrahydrofolate + NAD(+). It carries out the reaction uridine(54) in tRNA + (6R)-5,10-methylene-5,6,7,8-tetrahydrofolate + NADPH + H(+) = 5-methyluridine(54) in tRNA + (6S)-5,6,7,8-tetrahydrofolate + NADP(+). Its function is as follows. Catalyzes the folate-dependent formation of 5-methyl-uridine at position 54 (M-5-U54) in all tRNAs. The polypeptide is Methylenetetrahydrofolate--tRNA-(uracil-5-)-methyltransferase TrmFO (Cereibacter sphaeroides (strain ATCC 17025 / ATH 2.4.3) (Rhodobacter sphaeroides)).